We begin with the raw amino-acid sequence, 245 residues long: Methyltransferase-like protein 27 (245 aa).

The protein is Methyltransferase-like protein 27 of Homo sapiens (Human).